We begin with the raw amino-acid sequence, 323 residues long: SPbeta prophage-derived uncharacterized protein YorG (323 aa).

Positions 222–272 (TAENLEKAIIEAVERQEQAEGIVAVTYEEQKQNNASEELDFNSLMDQIKEI) form a coiled coil.

This chain is SPbeta prophage-derived uncharacterized protein YorG (yorG), found in Bacillus subtilis (strain 168).